The sequence spans 851 residues: Probable alpha,alpha-trehalose-phosphate synthase [UDP-forming] 7 (851 aa).

Residue S5 is modified to Phosphoserine. Phosphothreonine is present on T32. Residues 59-540 (DRMIIVANRL…SRSFLQDLER (482 aa)) are glycosyltransferase.

It in the N-terminal section; belongs to the glycosyltransferase 20 family. The protein in the C-terminal section; belongs to the trehalose phosphatase family. As to quaternary structure, binds to the phosphopeptide-binding site of GRF/14-3-3. Post-translationally, phosphorylated. Expressed in seedlings, leaves, roots, stems, flowers and siliques.

It carries out the reaction D-glucose 6-phosphate + UDP-alpha-D-glucose = alpha,alpha-trehalose 6-phosphate + UDP + H(+). This Arabidopsis thaliana (Mouse-ear cress) protein is Probable alpha,alpha-trehalose-phosphate synthase [UDP-forming] 7 (TPS7).